The following is a 121-amino-acid chain: Ribonuclease P protein component (121 aa).

The protein belongs to the RnpA family. Consists of a catalytic RNA component (M1 or rnpB) and a protein subunit.

It catalyses the reaction Endonucleolytic cleavage of RNA, removing 5'-extranucleotides from tRNA precursor.. Its function is as follows. RNaseP catalyzes the removal of the 5'-leader sequence from pre-tRNA to produce the mature 5'-terminus. It can also cleave other RNA substrates such as 4.5S RNA. The protein component plays an auxiliary but essential role in vivo by binding to the 5'-leader sequence and broadening the substrate specificity of the ribozyme. The polypeptide is Ribonuclease P protein component (Lactobacillus delbrueckii subsp. bulgaricus (strain ATCC 11842 / DSM 20081 / BCRC 10696 / JCM 1002 / NBRC 13953 / NCIMB 11778 / NCTC 12712 / WDCM 00102 / Lb 14)).